The primary structure comprises 79 residues: DNA-directed RNA polymerase subunit omega (79 aa).

It belongs to the RNA polymerase subunit omega family. In terms of assembly, in cyanobacteria the RNAP catalytic core is composed of 2 alpha, 1 beta, 1 beta', 1 gamma and 1 omega subunit. When a sigma factor is associated with the core the holoenzyme is formed, which can initiate transcription.

It carries out the reaction RNA(n) + a ribonucleoside 5'-triphosphate = RNA(n+1) + diphosphate. Its function is as follows. Promotes RNA polymerase assembly. Latches the N- and C-terminal regions of the beta' subunit thereby facilitating its interaction with the beta and alpha subunits. This is DNA-directed RNA polymerase subunit omega from Synechococcus sp. (strain JA-2-3B'a(2-13)) (Cyanobacteria bacterium Yellowstone B-Prime).